We begin with the raw amino-acid sequence, 379 residues long: Dihydroflavonol 4-reductase (379 aa).

Lys56 and Tyr175 together coordinate NADP(+).

Belongs to the NAD(P)-dependent epimerase/dehydratase family. Dihydroflavonol-4-reductase subfamily. In terms of tissue distribution, expressed in both leaf and hypocotyl tissues.

The enzyme catalyses a (2R,3S,4S)-leucoanthocyanidin + NADP(+) = a (2R,3R)-dihydroflavonol + NADPH + H(+). It carries out the reaction (2S)-flavan-4-ol + NADP(+) = (2S)-flavanone + NADPH + H(+). It functions in the pathway pigment biosynthesis; anthocyanin biosynthesis. Its function is as follows. Bifunctional enzyme involved in flavonoid metabolism. The chain is Dihydroflavonol 4-reductase from Solanum lycopersicum (Tomato).